The following is a 138-amino-acid chain: Histone H2B.8 (138 aa).

Positions 1-38 are enriched in basic and acidic residues; sequence MAPKAAEKKPAGKKPAEKAPAEKLPKAEKKITKEGGSE. The tract at residues 1–45 is disordered; the sequence is MAPKAAEKKPAGKKPAEKAPAEKLPKAEKKITKEGGSEKKKKKSK. Ala-2 carries the post-translational modification N,N,N-trimethylalanine; alternate. A N,N-dimethylalanine; alternate modification is found at Ala-2. Ala-2 is modified (N-methylalanine; alternate). An N6-methyllysine modification is found at Lys-4. N6-acetyllysine is present on residues Lys-8 and Lys-13. The residue at position 14 (Lys-14) is an N6,N6-dimethyllysine. N6-acetyllysine is present on residues Lys-18, Lys-23, Lys-29, and Lys-30. Lys-134 participates in a covalent cross-link: Glycyl lysine isopeptide (Lys-Gly) (interchain with G-Cter in ubiquitin).

Belongs to the histone H2B family. The nucleosome is a histone octamer containing two molecules each of H2A, H2B, H3 and H4 assembled in one H3-H4 heterotetramer and two H2A-H2B heterodimers. The octamer wraps approximately 147 bp of DNA. Can be acetylated to form H2BK6ac, H2BK33ac and H2BK34ac. Post-translationally, monoubiquitinated by BRE1 to form H2BK143ub1 and deubiquitinated by UBP26. Required for heterochromatic histone H3 di- and trimethylation at H3K4me. May give a specific tag for epigenetic transcriptional activation.

Its subcellular location is the nucleus. It localises to the chromosome. Functionally, core component of nucleosome. Nucleosomes wrap and compact DNA into chromatin, limiting DNA accessibility to the cellular machineries which require DNA as a template. Histones thereby play a central role in transcription regulation, DNA repair, DNA replication and chromosomal stability. DNA accessibility is regulated via a complex set of post-translational modifications of histones, also called histone code, and nucleosome remodeling. The polypeptide is Histone H2B.8 (Arabidopsis thaliana (Mouse-ear cress)).